We begin with the raw amino-acid sequence, 163 residues long: Large ribosomal subunit protein uL10 (163 aa).

This sequence belongs to the universal ribosomal protein uL10 family. As to quaternary structure, part of the ribosomal stalk of the 50S ribosomal subunit. The N-terminus interacts with L11 and the large rRNA to form the base of the stalk. The C-terminus forms an elongated spine to which L12 dimers bind in a sequential fashion forming a multimeric L10(L12)X complex.

Its function is as follows. Forms part of the ribosomal stalk, playing a central role in the interaction of the ribosome with GTP-bound translation factors. The polypeptide is Large ribosomal subunit protein uL10 (Histophilus somni (strain 129Pt) (Haemophilus somnus)).